The sequence spans 462 residues: Arginine biosynthesis bifunctional protein ArgJ, mitochondrial (462 aa).

Residues T189, K215, T236, E327, N457, and S462 each contribute to the substrate site. Residue T236 is the Nucleophile of the active site.

This sequence belongs to the ArgJ family. Heterodimer of an alpha and a beta chain. The alpha and beta chains are autoproteolytically processed from a single precursor protein within the mitochondrion.

The protein localises to the mitochondrion matrix. The catalysed reaction is N(2)-acetyl-L-ornithine + L-glutamate = N-acetyl-L-glutamate + L-ornithine. It carries out the reaction L-glutamate + acetyl-CoA = N-acetyl-L-glutamate + CoA + H(+). The protein operates within amino-acid biosynthesis; L-arginine biosynthesis; L-ornithine and N-acetyl-L-glutamate from L-glutamate and N(2)-acetyl-L-ornithine (cyclic): step 1/1. It functions in the pathway amino-acid biosynthesis; L-arginine biosynthesis; N(2)-acetyl-L-ornithine from L-glutamate: step 1/4. Functionally, catalyzes two activities which are involved in the cyclic version of arginine biosynthesis: the synthesis of acetylglutamate from glutamate and acetyl-CoA, and of ornithine by transacetylation between acetylornithine and glutamate. The protein is Arginine biosynthesis bifunctional protein ArgJ, mitochondrial of Postia placenta (strain ATCC 44394 / Madison 698-R) (Brown rot fungus).